Consider the following 357-residue polypeptide: GTPase Obg (357 aa).

An Obg domain is found at 1–159 (MKFVDEAFID…RNLKLELKVL (159 aa)). Residues 160-334 (ADVGLLGMPN…LIQAIYQHVR (175 aa)) form the OBG-type G domain. GTP contacts are provided by residues 166–173 (GMPNAGKS), 191–195 (FTTLH), 213–216 (DIPG), 284–287 (NKLD), and 315–317 (SAL). Ser-173 and Thr-193 together coordinate Mg(2+).

It belongs to the TRAFAC class OBG-HflX-like GTPase superfamily. OBG GTPase family. In terms of assembly, monomer. Mg(2+) is required as a cofactor.

Its subcellular location is the cytoplasm. An essential GTPase which binds GTP, GDP and possibly (p)ppGpp with moderate affinity, with high nucleotide exchange rates and a fairly low GTP hydrolysis rate. Plays a role in control of the cell cycle, stress response, ribosome biogenesis and in those bacteria that undergo differentiation, in morphogenesis control. This chain is GTPase Obg, found in Paracidovorax citrulli (strain AAC00-1) (Acidovorax citrulli).